We begin with the raw amino-acid sequence, 487 residues long: Protein SMG9 (487 aa).

2 disordered regions span residues 30 to 83 and 136 to 164; these read EDAA…PPAL and RDKG…LQPP. The segment covering 42–70 has biased composition (basic and acidic residues); the sequence is LKKDRDREQETWDRERDKDRKLERDREAE.

This sequence belongs to the SMG9 family.

Involved in nonsense-mediated decay (NMD) of mRNAs containing premature stop codons. Probable component of kinase complex containing nonC and recruited to stalled ribosomes. This Drosophila melanogaster (Fruit fly) protein is Protein SMG9.